Reading from the N-terminus, the 1082-residue chain is uncharacterized protein (1082 aa).

The PNPLA domain occupies 50–319 (TTMTGGVSLA…LDNRPIGVLF (270 aa)). The short motif at 120-124 (GTSAG) is the GXSXG element. The active-site Nucleophile is serine 122. Aspartate 306 acts as the Proton acceptor in catalysis. The short motif at 306-308 (DGG) is the DGA/G element. The next 4 membrane-spanning stretches (helical) occupy residues 959-979 (IARSTIIAGALLLVLGVAAAI), 982-1002 (VTVFGVTGLIAAGTGGLLVVL), 1012-1032 (LFALLSFSVVGAVLALATPVV), and 1057-1077 (WWHPLVVVGLIALVAIMIAAA).

It is found in the cell membrane. This is an uncharacterized protein from Mycobacterium tuberculosis (strain ATCC 25618 / H37Rv).